Reading from the N-terminus, the 110-residue chain is Large ribosomal subunit protein uL22 (110 aa).

This sequence belongs to the universal ribosomal protein uL22 family. As to quaternary structure, part of the 50S ribosomal subunit.

Functionally, this protein binds specifically to 23S rRNA; its binding is stimulated by other ribosomal proteins, e.g. L4, L17, and L20. It is important during the early stages of 50S assembly. It makes multiple contacts with different domains of the 23S rRNA in the assembled 50S subunit and ribosome. Its function is as follows. The globular domain of the protein is located near the polypeptide exit tunnel on the outside of the subunit, while an extended beta-hairpin is found that lines the wall of the exit tunnel in the center of the 70S ribosome. The chain is Large ribosomal subunit protein uL22 from Acidovorax ebreus (strain TPSY) (Diaphorobacter sp. (strain TPSY)).